Reading from the N-terminus, the 3082-residue chain is Autotransporter adhesin BadA (3082 aa).

An N-terminal signal peptide occupies residues 1–47 (MKKLSVTSKRQYNLYASPISRRLSLLMKLSLETVTVMFLLGASPVLA). Residues 48–376 (SNLALTGAKN…DAVNVAQLKA (329 aa)) form a binds to host cells region. The segment at 48–2901 (SNLALTGAKN…KVQDIATVAD (2854 aa)) is surface exposed passenger domain. The does not bind host cells, no host proangiogenic cytokine induction, collagen or fibronectin, no autoagglutination stretch occupies residues 53-2850 (TGAKNLSQNS…DARHNGVDSK (2798 aa)). Residues 470-2850 (ITGVAEGTDA…DARHNGVDSK (2381 aa)) are required to bind fibronectin, not required for surface expression on bacteria, bacterial autoagglutination, host cell binding, collagen binding or host proangiogenic cytokine induction. Residues 2902 to 3027 (SAVKYEKDST…VSNLRYYDIP (126 aa)) form an outer membrane translocation of the passenger domain region. 4 beta stranded membrane passes run 3028 to 3039 (GSLSLSFGTGIW), 3044 to 3051 (AFAIGAGY), 3055 to 3065 (DGNIRSNLSIT), and 3070 to 3082 (QWGV…LRLK). Positions 3028–3082 (GSLSLSFGTGIWRSQSAFAIGAGYTSEDGNIRSNLSITSSGGQWGVGAGITLRLK) are translocator domain.

The protein belongs to the autotransporter-2 (AT-2) (TC 1.B.40) family. As to quaternary structure, homotrimer. Crystals of the head region form trimers.

It localises to the cell surface. Its subcellular location is the cell outer membrane. Mediates bacterial adherence to host endothelial cells and host extracellular matrix proteins (collagen type I, III, IV, laminin and fibronectin). Static versus dynamic adherence results differ slightly; in dynamic adherence studies bacteria bind to fixed components under a constant defined flow rate to simulate in vivo infection conditions. Induces secretion of host proangiogenic cytokines such as VEGFA, ADM, IGFBP-3 and IL-8. May prevent bacterial phagocytosis by macrophages. Probably mediates bacterial autoagglutination. Negatively impacts type IV secretion system effectors (VirB/D4 T4SS and its substrate Bep proteins), possibly by preventing close association of host and bacterial cells. This implies the 2 factors are expressed at different times during infection. This is Autotransporter adhesin BadA from Bartonella henselae (Rochalimaea henselae).